Reading from the N-terminus, the 63-residue chain is Large ribosomal subunit protein uL29 (63 aa).

The protein belongs to the universal ribosomal protein uL29 family.

The sequence is that of Large ribosomal subunit protein uL29 from Ectopseudomonas mendocina (strain ymp) (Pseudomonas mendocina).